We begin with the raw amino-acid sequence, 332 residues long: 2,3-diketo-L-gulonate reductase (332 aa).

Catalysis depends on His44, which acts as the Proton donor. Residues 168–174 (ITMIDMS), 224–225 (WK), and 304–306 (GHE) each bind NAD(+).

Belongs to the LDH2/MDH2 oxidoreductase family. DlgD subfamily. As to quaternary structure, homodimer.

Its subcellular location is the cytoplasm. The catalysed reaction is 3-dehydro-L-gulonate + NAD(+) = 2,3-dioxo-L-gulonate + NADH + H(+). It carries out the reaction 3-dehydro-L-gulonate + NADP(+) = 2,3-dioxo-L-gulonate + NADPH + H(+). Functionally, catalyzes the reduction of 2,3-diketo-L-gulonate in the presence of NADH, to form 3-keto-L-gulonate. The chain is 2,3-diketo-L-gulonate reductase from Citrobacter koseri (strain ATCC BAA-895 / CDC 4225-83 / SGSC4696).